We begin with the raw amino-acid sequence, 109 residues long: Flagellar hook-basal body complex protein FliE (109 aa).

It belongs to the FliE family.

It localises to the bacterial flagellum basal body. This Pseudomonas syringae pv. tomato (strain ATCC BAA-871 / DC3000) protein is Flagellar hook-basal body complex protein FliE.